A 130-amino-acid chain; its full sequence is MAQKIRKSTFKKDKNSSINGVVHIQSTFNNTIVTITNITGDTISWASAGSSGFKGARKGTPFAAQTAAEKAALDALSKGMKSVEVLVKGQGSGRETAIRSIEGAGFEVTSIQDITPVPHNGCRPPKRRRV.

This sequence belongs to the universal ribosomal protein uS11 family. As to quaternary structure, part of the 30S ribosomal subunit.

The protein resides in the plastid. Its subcellular location is the chloroplast. In Trieres chinensis (Marine centric diatom), this protein is Small ribosomal subunit protein uS11c.